The sequence spans 436 residues: Acetyl-CoA decarbonylase/synthase complex subunit delta 2 (436 aa).

It belongs to the CdhD family. Heterodimer of delta and gamma chains. The ACDS complex is made up of alpha, epsilon, beta, gamma and delta chains with a probable stoichiometry of (alpha(2)epsilon(2))(4)-beta(8)-(gamma(1)delta(1))(8) (Potential).

It participates in one-carbon metabolism; methanogenesis from acetate. Functionally, part of a complex that catalyzes the reversible cleavage of acetyl-CoA, allowing growth on acetate as sole source of carbon and energy. Probably maintains the overall quaternary structure of the ACDS complex. The chain is Acetyl-CoA decarbonylase/synthase complex subunit delta 2 (cdhD2) from Methanosarcina acetivorans (strain ATCC 35395 / DSM 2834 / JCM 12185 / C2A).